A 667-amino-acid polypeptide reads, in one-letter code: DNA ligase (667 aa).

NAD(+) is bound by residues 32–36 (DSEYD), 81–82 (SL), and E110. K112 (N6-AMP-lysine intermediate) is an active-site residue. 4 residues coordinate NAD(+): R133, E167, K283, and K307. Zn(2+)-binding residues include C401, C404, C419, and C424. The BRCT domain maps to 586–667 (EGHPEFSGKT…FVDKQNELNS (82 aa)).

It belongs to the NAD-dependent DNA ligase family. LigA subfamily. The cofactor is Mg(2+). Mn(2+) is required as a cofactor.

The catalysed reaction is NAD(+) + (deoxyribonucleotide)n-3'-hydroxyl + 5'-phospho-(deoxyribonucleotide)m = (deoxyribonucleotide)n+m + AMP + beta-nicotinamide D-nucleotide.. Its function is as follows. DNA ligase that catalyzes the formation of phosphodiester linkages between 5'-phosphoryl and 3'-hydroxyl groups in double-stranded DNA using NAD as a coenzyme and as the energy source for the reaction. It is essential for DNA replication and repair of damaged DNA. The sequence is that of DNA ligase from Staphylococcus aureus (strain USA300).